Here is a 380-residue protein sequence, read N- to C-terminus: Guanine nucleotide-binding protein subunit beta (380 aa).

WD repeat units follow at residues 64 to 103 (GHSGKVYSLDWTPEKNWIVSASQDGRLIVWNALTSQKTHA), 106 to 145 (LHCPWVMTCAFAPNGQSVACGGLDSACSIFNLNSQADRDG), 155 to 195 (GHKG…RISI), 203 to 243 (GHTA…RAVR), 247 to 286 (GHEGDINSVKFFPDGQRFGTGSDDGTCRLFDVRTGHQLQV), 296 to 335 (NELPTVTSIAFSISGRLLFAGYSNGDCYVWDTLLAEVVLN), and 342 to 380 (SHEGRISCLGLSSDGSALCTGSWDKNLKIWAFSGHRKIV).

Belongs to the WD repeat G protein beta family. G proteins are composed of 3 units, alpha, beta and gamma. Interacts with the gamma subunits RGG1 and RGG2.

Its subcellular location is the cell membrane. In terms of biological role, guanine nucleotide-binding proteins (G proteins) are involved as modulators or transducers in various transmembrane signaling systems. The beta and gamma chains are required for the GTPase activity, for replacement of GDP by GTP, and for G protein-effector interaction. This chain is Guanine nucleotide-binding protein subunit beta, found in Oryza sativa subsp. indica (Rice).